Here is a 1063-residue protein sequence, read N- to C-terminus: Retinoblastoma-like protein 1 (1063 aa).

Thr332, Thr369, and Thr385 each carry phosphothreonine. The segment at 383 to 584 (VTTPVASATQ…WEALHASANR (202 aa)) is domain A. The segment at 383–944 (VTTPVASATQ…GRVKSFALKY (562 aa)) is pocket; binds T and E1A. The spacer stretch occupies residues 585–779 (VPSCEEVIFP…AQDAHLTGVS (195 aa)). Phosphoserine is present on residues Ser640, Ser650, Ser748, and Ser761. The tract at residues 780–944 (KPKRTGSLAL…GRVKSFALKY (165 aa)) is domain B. Ser959, Ser970, and Ser983 each carry phosphoserine. A Phosphothreonine modification is found at Thr992. Phosphoserine is present on residues Ser1004 and Ser1036.

The protein belongs to the retinoblastoma protein (RB) family. As to quaternary structure, component of the DREAM complex (also named LINC complex) at least composed of E2F4, E2F5, LIN9, LIN37, LIN52, LIN54, MYBL1, MYBL2, RBL1, RBL2, RBBP4, TFDP1 and TFDP2. The complex exists in quiescent cells where it represses cell cycle-dependent genes. It dissociates in S phase when LIN9, LIN37, LIN52 and LIN54 form a subcomplex that binds to MYBL2. Interacts with AATF. Interacts with KDM5A. Interacts with KMT5B and KMT5C. Interacts with USP4. Interacts with RBBP9. In terms of processing, cell-cycle arrest properties are inactivated by phosphorylation on Thr-332, Ser-640, Ser-959 and Ser-970 by CDK4. In terms of tissue distribution, highly expressed in fetal heart and liver. Expressed at low levels in all other fetal tissues except skeletal muscle. High levels in neonatal spleen and thymus with low levels in other tissues. In adult, highly expressed in testis. Barely detectable in other tissues.

Its subcellular location is the nucleus. In terms of biological role, key regulator of entry into cell division. Directly involved in heterochromatin formation by maintaining overall chromatin structure and, in particular, that of constitutive heterochromatin by stabilizing histone methylation. Recruits and targets histone methyltransferases KMT5B and KMT5C, leading to epigenetic transcriptional repression. Controls histone H4 'Lys-20' trimethylation. Probably acts as a transcription repressor by recruiting chromatin-modifying enzymes to promoters. Potent inhibitor of E2F-mediated trans-activation. May act as a tumor suppressor. This chain is Retinoblastoma-like protein 1 (Rbl1), found in Mus musculus (Mouse).